Reading from the N-terminus, the 1081-residue chain is Probable cellulose synthase A catalytic subunit 8 [UDP-forming] (1081 aa).

Residues M1–M277 lie on the Cytoplasmic side of the membrane. Zn(2+) is bound by residues C19, C22, C38, C41, C46, C49, C61, and C64. The segment at C19 to K65 adopts an RING-type; degenerate zinc-finger fold. The tract at residues K72–Y148 is disordered. Acidic residues predominate over residues E81–S91. Basic and acidic residues predominate over residues Q103–R112. The helical transmembrane segment at V278–V298 threads the bilayer. The Extracellular segment spans residues R299–N300. Residues A301–L321 traverse the membrane as a helical segment. Residues D322 to S864 are Cytoplasmic-facing. UDP-alpha-D-glucose contacts are provided by S360, K366, E367, and D396. D396 is a catalytic residue. A coiled-coil region spans residues V450–V477. UDP-alpha-D-glucose is bound at residue K537. Residues K538 and D562 each coordinate Mn(2+). The interval S660 to H684 is disordered. Residues G664 to N682 show a composition bias toward basic residues. D781 is a catalytic residue. Residues I865–I885 traverse the membrane as a helical segment. Residues P886–N890 are Extracellular-facing. Residues F891–M911 traverse the membrane as a helical segment. The Cytoplasmic portion of the chain corresponds to R912 to Q926. The helical transmembrane segment at F927–V947 threads the bilayer. The Extracellular segment spans residues L948 to T977. A glycan (N-linked (GlcNAc...) asparagine) is linked at N954. Residues T978–I998 form a helical membrane-spanning segment. Residues S999–W1009 lie on the Cytoplasmic side of the membrane. A helical transmembrane segment spans residues G1010 to L1030. Residues K1031–R1039 lie on the Extracellular side of the membrane. Residues T1040 to V1060 form a helical membrane-spanning segment. At R1061 to C1081 the chain is on the cytoplasmic side.

Belongs to the glycosyltransferase 2 family. Plant cellulose synthase subfamily. The cofactor is Mn(2+). Zn(2+) is required as a cofactor.

It is found in the cell membrane. The catalysed reaction is [(1-&gt;4)-beta-D-glucosyl](n) + UDP-alpha-D-glucose = [(1-&gt;4)-beta-D-glucosyl](n+1) + UDP + H(+). The protein operates within glycan metabolism; plant cellulose biosynthesis. Functionally, probable catalytic subunit of cellulose synthase terminal complexes ('rosettes'), required for beta-1,4-glucan microfibril crystallization, a major mechanism of the cell wall formation. This chain is Probable cellulose synthase A catalytic subunit 8 [UDP-forming] (CESA8), found in Oryza sativa subsp. japonica (Rice).